Here is a 505-residue protein sequence, read N- to C-terminus: Histidine ammonia-lyase (505 aa).

The 5-imidazolinone (Ala-Gly) cross-link spans 141–143 (ASG). The residue at position 142 (Ser-142) is a 2,3-didehydroalanine (Ser).

It belongs to the PAL/histidase family. Post-translationally, contains an active site 4-methylidene-imidazol-5-one (MIO), which is formed autocatalytically by cyclization and dehydration of residues Ala-Ser-Gly.

It localises to the cytoplasm. It carries out the reaction L-histidine = trans-urocanate + NH4(+). Its pathway is amino-acid degradation; L-histidine degradation into L-glutamate; N-formimidoyl-L-glutamate from L-histidine: step 1/3. This is Histidine ammonia-lyase from Bacillus thuringiensis (strain Al Hakam).